Consider the following 363-residue polypeptide: Probable mannitol dehydrogenase 3 (363 aa).

Zn(2+) is bound by residues Cys-51, His-73, Cys-104, Cys-107, Cys-110, Cys-118, and Cys-168.

The protein belongs to the zinc-containing alcohol dehydrogenase family. Zn(2+) is required as a cofactor.

The enzyme catalyses D-mannitol + NAD(+) = D-mannose + NADH + H(+). Its function is as follows. Oxidizes mannitol to mannose. Provides the initial step by which translocated mannitol is committed to central metabolism and, by regulating mannitol pool size, is important in regulating salt tolerance at the cellular level. The polypeptide is Probable mannitol dehydrogenase 3 (CAD3) (Stylosanthes humilis (Townsville stylo)).